The following is a 406-amino-acid chain: Leu/Ile/Val-binding protein homolog 5 (406 aa).

Positions 1-29 (MIGTRLPAWTRVLACGVAGLSLMTISAKA) are cleaved as a signal peptide.

The protein belongs to the leucine-binding protein family.

Component of an amino-acid transport system. This chain is Leu/Ile/Val-binding protein homolog 5, found in Brucella suis biovar 1 (strain 1330).